We begin with the raw amino-acid sequence, 394 residues long: WAT1-related protein At2g40900 (394 aa).

Helical transmembrane passes span 13–33 (FAMV…KTVL), 40–60 (YVLV…FALL), 67–87 (SKMT…GPVI), 102–122 (TFSS…ATLF), 142–162 (LVTV…INFF), 180–200 (AAVF…LQAA), 209–229 (LSMS…LAFV), 245–265 (LLAS…VQGL), 273–293 (VFVT…SFFV), and 298–318 (IYLG…AVLW). 2 EamA domains span residues 22–147 (YAGM…TVVG) and 189–317 (LSWA…YAVL).

It belongs to the drug/metabolite transporter (DMT) superfamily. Plant drug/metabolite exporter (P-DME) (TC 2.A.7.4) family.

The protein localises to the membrane. In Arabidopsis thaliana (Mouse-ear cress), this protein is WAT1-related protein At2g40900.